A 236-amino-acid polypeptide reads, in one-letter code: Concanavalin-Ma (236 aa).

Residues Glu-8 and Asp-10 each coordinate Mn(2+). Positions 10, 12, 14, and 19 each coordinate Ca(2+). A carbohydrate is bound at residue Tyr-12. The Mn(2+) site is built by Asp-19 and His-24. 98–99 is an a carbohydrate binding site; the sequence is LY. Ca(2+) is bound at residue Asp-207. Arg-227 contacts a carbohydrate.

It belongs to the leguminous lectin family. Homotetramer.

Its function is as follows. Glucose/D-mannose specific lectin. The sequence is that of Concanavalin-Ma from Canavalia rosea (Beach bean).